The sequence spans 208 residues: Small ribosomal subunit protein uS3 (208 aa).

The KH type-2 domain occupies 38–106 (IRDYIKARLY…EILIDIQEVR (69 aa)).

Belongs to the universal ribosomal protein uS3 family. In terms of assembly, part of the 30S ribosomal subunit. Forms a tight complex with proteins S10 and S14.

Functionally, binds the lower part of the 30S subunit head. Binds mRNA in the 70S ribosome, positioning it for translation. This chain is Small ribosomal subunit protein uS3, found in Syntrophobacter fumaroxidans (strain DSM 10017 / MPOB).